The primary structure comprises 353 residues: D-alanine--D-alanine ligase (353 aa).

An ATP-grasp domain is found at 141–349; it reads KAAFAAAGLS…LPQLVAELVD (209 aa). 176–231 contacts ATP; that stretch reads EQELGYPCFVKPANLGSSVGITKANNRDELLAGLHQAAALDPRLLVEQGVNARELE. Mg(2+) is bound by residues D302, E316, and N318.

Belongs to the D-alanine--D-alanine ligase family. Mg(2+) serves as cofactor. It depends on Mn(2+) as a cofactor.

It is found in the cytoplasm. The catalysed reaction is 2 D-alanine + ATP = D-alanyl-D-alanine + ADP + phosphate + H(+). Its pathway is cell wall biogenesis; peptidoglycan biosynthesis. Functionally, cell wall formation. The sequence is that of D-alanine--D-alanine ligase from Synechococcus sp. (strain WH7803).